The following is a 340-amino-acid chain: Serine racemase (340 aa).

Glu13 is a binding site for Mg(2+). Residues Ser31, Ser32, Ile33, Lys51, and Thr52 each coordinate ATP. The active-site Proton acceptor is Lys56. Lys56 is modified (N6-(pyridoxal phosphate)lysine). Ca(2+) is bound by residues Pro69 and Thr81. The active-site Proton acceptor is the Ser84. Asn86 contributes to the pyridoxal 5'-phosphate binding site. An ATP-binding site is contributed by Gln89. Residue Cys113 is modified to S-nitrosocysteine. An ATP-binding site is contributed by Tyr121. Asn154 serves as a coordination point for pyridoxal 5'-phosphate. Residue Asp178 participates in Mg(2+) binding. Pyridoxal 5'-phosphate-binding residues include Gly185, Gly186, Gly187, Gly188, and Met189. Positions 210, 214, 216, and 247 each coordinate Mg(2+). Residues Glu210, Ala214, Asp216, and Asn247 each contribute to the Ca(2+) site. Mn(2+) is bound by residues Glu210, Ala214, and Asp216. Residue Lys279 coordinates ATP. Ser313 lines the pyridoxal 5'-phosphate pocket. ATP is bound at residue Asn316.

Belongs to the serine/threonine dehydratase family. In terms of assembly, homodimer. Requires Mg(2+) as cofactor. It depends on Mn(2+) as a cofactor. Ca(2+) is required as a cofactor. The cofactor is pyridoxal 5'-phosphate. S-nitrosylated, leading to decrease the enzyme activity. Expressed in the cerebellum, hippocampus, dorsolateral prefrontal cortex, and in motor neurons and glial cells of the lumbar spinal cord (at protein level). Increased in the dorsolateral prefrontal cortex of schizophrenic patients (at protein level). Brain: expressed at high levels in hippocampus and corpus callosum, intermediate levels in substantia nigra and caudate, and low levels in amygdala, thalamus, and subthalamic nuclei. Expressed in heart, skeletal muscle, kidney, and liver.

It catalyses the reaction L-serine = D-serine. The catalysed reaction is D-serine = pyruvate + NH4(+). The enzyme catalyses L-serine = pyruvate + NH4(+). With respect to regulation, allosterically activated by magnesium, and possibly also other divalent metal cations. Allosterically activated by ATP, ADP or GTP. Competitively inhibited by malonate. Inhibited by meso-tartrate and malonate. Functionally, catalyzes the synthesis of D-serine from L-serine. D-serine is a key coagonist with glutamate at NMDA receptors. Has dehydratase activity towards both L-serine and D-serine. The chain is Serine racemase (SRR) from Homo sapiens (Human).